The sequence spans 177 residues: Putative zinc finger protein 826 (177 aa).

Residues 99–114 (KTFTWSSSPHKHRRTH) form a C2H2-type 1; degenerate zinc finger. Residues 120–142 (YKCEECGKAFTASSTLSEYKTIH) form a C2H2-type 2; degenerate zinc finger. The C2H2-type 3 zinc finger occupies 148-170 (CKCEECGKAFNWSSDFNKHKRIH).

Its subcellular location is the nucleus. Its function is as follows. May be involved in transcriptional regulation. The protein is Putative zinc finger protein 826 (ZNF826P) of Homo sapiens (Human).